A 307-amino-acid polypeptide reads, in one-letter code: Predicted GPI-anchored protein 44 (307 aa).

The first 22 residues, 1 to 22 (MLSTNNLLILLIFSFLITNVKS), serve as a signal peptide directing secretion. Asn-146 and Asn-217 each carry an N-linked (GlcNAc...) asparagine glycan. The disordered stretch occupies residues 232-261 (TPQPLLETPSQESSAPNIDSTTPTTIDNTV). The span at 239-254 (TPSQESSAPNIDSTTP) shows a compositional bias: polar residues. Residue Gly-286 is the site of GPI-anchor amidated glycine attachment. Positions 287–307 (GAMGYPSISVALGLVFIAYLV) are cleaved as a propeptide — removed in mature form.

The protein localises to the cell membrane. This chain is Predicted GPI-anchored protein 44 (PGA44), found in Candida albicans (strain SC5314 / ATCC MYA-2876) (Yeast).